Reading from the N-terminus, the 716-residue chain is uncharacterized protein (716 aa).

Disordered stretches follow at residues 84-103 and 153-189; these read SPSI…ERYP and VTDE…SQGQ. The residue at position 97 (serine 97) is a Phosphoserine. Glycyl lysine isopeptide (Lys-Gly) (interchain with G-Cter in SUMO2) cross-links involve residues lysine 201, lysine 204, lysine 237, lysine 283, and lysine 626.

This is an uncharacterized protein from Mus musculus (Mouse).